Here is a 534-residue protein sequence, read N- to C-terminus: Probable DNA polymerase epsilon subunit 2 (534 aa).

It belongs to the DNA polymerase epsilon subunit B family. As to quaternary structure, consists of four subunits.

It localises to the nucleus. Its function is as follows. Accessory component of the DNA polymerase epsilon complex. Participates in DNA repair and in chromosomal DNA replication. This is Probable DNA polymerase epsilon subunit 2 (pole-2) from Caenorhabditis elegans.